A 501-amino-acid polypeptide reads, in one-letter code: MVIVYFILILTGVIMVHELGHYLFARLFKVKVLEFAIGFGPKIFSVKGRETTFRLNVFPIGGYVRMLGEEGEEIADEEEKEKSFYAKPAWQRFLITLAGPLFSILAGYLLFLPITLNWGIALPGIDEVVPGSPAEEAGLRRGDIIYSINDKIAFDTSIISNEIQKGLPVELVIIRNGEKKSLRLTPRMYPETYEFVLESAEGTPSGKLVSVNGNRDTSVLKEFVNEYVVLEFEGGTVKGILKQFNEIPARYMIGISFSGLAPVFKKDIYFKEGLFVFKKGDRIVRVEDQEIEGWQDLVVLYQRLTLGKDTMIVSLQGENIEWWRGLSGSVRVVIKRGDSTIEKNVEASFLKNILETPDLLEMGVPRYKPKNPLEAVNLSVKACNYVLLTTASSLKNFFRNVQTGQIVGVVGLAGVISAASKTGLEAVLTVVAVITISLGVLNLLPLPALDGGRIIFSLVEMITRKKLNPQVENIIHFLGFIFLMILFLYITFLDIGRMMGI.

Histidine 17 contributes to the Zn(2+) binding site. Residue glutamate 18 is part of the active site. Histidine 21 serves as a coordination point for Zn(2+). The next 4 helical transmembrane spans lie at 93–115 (FLITLAGPLFSILAGYLLFLPIT), 401–420 (VQTGQIVGVVGLAGVISAAS), 427–449 (VLTVVAVITISLGVLNLLPLPAL), and 474–496 (IIHFLGFIFLMILFLYITFLDIG). One can recognise a PDZ domain in the interval 96–180 (TLAGPLFSIL…LVIIRNGEKK (85 aa)).

It belongs to the peptidase M50B family. It depends on Zn(2+) as a cofactor.

It localises to the cell inner membrane. This chain is Putative zinc metalloprotease TM_0890, found in Thermotoga maritima (strain ATCC 43589 / DSM 3109 / JCM 10099 / NBRC 100826 / MSB8).